A 338-amino-acid polypeptide reads, in one-letter code: GDSL esterase/lipase At5g63170 (338 aa).

A signal peptide spans 1 to 23 (MNSLVIQTTIVLVSVISVSIVHA). Catalysis depends on Ser35, which acts as the Nucleophile. Catalysis depends on residues Asp313 and His316.

Belongs to the 'GDSL' lipolytic enzyme family.

Its subcellular location is the secreted. The polypeptide is GDSL esterase/lipase At5g63170 (Arabidopsis thaliana (Mouse-ear cress)).